Consider the following 84-residue polypeptide: Exodeoxyribonuclease 7 small subunit (84 aa).

This sequence belongs to the XseB family. In terms of assembly, heterooligomer composed of large and small subunits.

Its subcellular location is the cytoplasm. It catalyses the reaction Exonucleolytic cleavage in either 5'- to 3'- or 3'- to 5'-direction to yield nucleoside 5'-phosphates.. Its function is as follows. Bidirectionally degrades single-stranded DNA into large acid-insoluble oligonucleotides, which are then degraded further into small acid-soluble oligonucleotides. The sequence is that of Exodeoxyribonuclease 7 small subunit from Haemophilus influenzae (strain 86-028NP).